Consider the following 257-residue polypeptide: MATIKEVTALLAQVDSLDSPVWDQLAQDERAGVQAAIKKRRKELEKEAVEDARLEAMLFYEKSLYENGVEFIAGIDEVGRGPLAGPVVAAAVILPKGCKIRYLNDSKKIPKSKHEAIYQEVMERAVAVGVGIKDAALIDEVNIYEATKLAMLEALGKLSQKPDHLLIDAMKLDTPIPQTSIIKGDANSLSIAAASIVAKVTRDKMMADYDKEFSGYGFAKNAGYGTTEHLEGLNKLGITPIHRKTFEPIKSMVAGGN.

An RNase H type-2 domain is found at 70–257 (EFIAGIDEVG…PIKSMVAGGN (188 aa)). A divalent metal cation contacts are provided by D76, E77, and D168.

It belongs to the RNase HII family. Mn(2+) is required as a cofactor. It depends on Mg(2+) as a cofactor.

Its subcellular location is the cytoplasm. The enzyme catalyses Endonucleolytic cleavage to 5'-phosphomonoester.. In terms of biological role, endonuclease that specifically degrades the RNA of RNA-DNA hybrids. This chain is Ribonuclease HII, found in Streptococcus suis (strain 98HAH33).